Reading from the N-terminus, the 935-residue chain is Isoleucine--tRNA ligase (935 aa).

Residues proline 58–histidine 68 carry the 'HIGH' region motif. Glutamate 558 contributes to the L-isoleucyl-5'-AMP binding site. Positions lysine 599–serine 603 match the 'KMSKS' region motif. Lysine 602 is a binding site for ATP. Residues cysteine 897, cysteine 900, cysteine 917, and cysteine 920 each coordinate Zn(2+).

The protein belongs to the class-I aminoacyl-tRNA synthetase family. IleS type 1 subfamily. Monomer. Zn(2+) serves as cofactor.

Its subcellular location is the cytoplasm. The catalysed reaction is tRNA(Ile) + L-isoleucine + ATP = L-isoleucyl-tRNA(Ile) + AMP + diphosphate. Its function is as follows. Catalyzes the attachment of isoleucine to tRNA(Ile). As IleRS can inadvertently accommodate and process structurally similar amino acids such as valine, to avoid such errors it has two additional distinct tRNA(Ile)-dependent editing activities. One activity is designated as 'pretransfer' editing and involves the hydrolysis of activated Val-AMP. The other activity is designated 'posttransfer' editing and involves deacylation of mischarged Val-tRNA(Ile). This chain is Isoleucine--tRNA ligase, found in Francisella tularensis subsp. tularensis (strain WY96-3418).